The sequence spans 368 residues: Phosphoserine aminotransferase (368 aa).

Arg-42 serves as a coordination point for L-glutamate. Pyridoxal 5'-phosphate is bound by residues 76 to 77 (AS), Trp-102, Thr-152, Asp-179, and Gln-202. Residue Lys-203 is modified to N6-(pyridoxal phosphate)lysine. 245–246 (NT) contacts pyridoxal 5'-phosphate.

Belongs to the class-V pyridoxal-phosphate-dependent aminotransferase family. SerC subfamily. Homodimer. The cofactor is pyridoxal 5'-phosphate.

The protein localises to the cytoplasm. It carries out the reaction O-phospho-L-serine + 2-oxoglutarate = 3-phosphooxypyruvate + L-glutamate. The enzyme catalyses 4-(phosphooxy)-L-threonine + 2-oxoglutarate = (R)-3-hydroxy-2-oxo-4-phosphooxybutanoate + L-glutamate. It participates in amino-acid biosynthesis; L-serine biosynthesis; L-serine from 3-phospho-D-glycerate: step 2/3. Its pathway is cofactor biosynthesis; pyridoxine 5'-phosphate biosynthesis; pyridoxine 5'-phosphate from D-erythrose 4-phosphate: step 3/5. Its function is as follows. Catalyzes the reversible conversion of 3-phosphohydroxypyruvate to phosphoserine and of 3-hydroxy-2-oxo-4-phosphonooxybutanoate to phosphohydroxythreonine. This Nitrosomonas europaea (strain ATCC 19718 / CIP 103999 / KCTC 2705 / NBRC 14298) protein is Phosphoserine aminotransferase.